Consider the following 224-residue polypeptide: Protein HLJ1 (224 aa).

The J domain occupies 18–87 (DKHEFYEILK…RSIYDRIGRD (70 aa)). A compositionally biased stretch (basic and acidic residues) spans 84–93 (IGRDPDDRQM). Residues 84 to 107 (IGRDPDDRQMPSRGAASGFRGSAG) are disordered. Residue S109 is modified to Phosphoserine. The disordered stretch occupies residues 173-192 (NRGGSPFMRQQPRSRQQQQQ). Residues 181–192 (RQQPRSRQQQQQ) are compositionally biased toward low complexity.

The protein is Protein HLJ1 (HLJ1) of Saccharomyces cerevisiae (strain ATCC 204508 / S288c) (Baker's yeast).